The primary structure comprises 375 residues: Glucokinase 1 (375 aa).

Residue 25 to 30 coordinates ATP; the sequence is CDVGGS.

Belongs to the bacterial glucokinase family. Monomer. In terms of processing, the N-terminus is blocked.

It carries out the reaction D-glucose + ATP = D-glucose 6-phosphate + ADP + H(+). The polypeptide is Glucokinase 1 (GK1) (Trichomonas vaginalis).